We begin with the raw amino-acid sequence, 206 residues long: Small ribosomal subunit protein uS4 (206 aa).

In terms of domain architecture, S4 RNA-binding spans glycine 96–lysine 156.

Belongs to the universal ribosomal protein uS4 family. Part of the 30S ribosomal subunit. Contacts protein S5. The interaction surface between S4 and S5 is involved in control of translational fidelity.

Its function is as follows. One of the primary rRNA binding proteins, it binds directly to 16S rRNA where it nucleates assembly of the body of the 30S subunit. Functionally, with S5 and S12 plays an important role in translational accuracy. This is Small ribosomal subunit protein uS4 from Cronobacter sakazakii (strain ATCC BAA-894) (Enterobacter sakazakii).